The sequence spans 58 residues: Enterocin-HF (58 aa).

Residues 1–15 (MEKLTVKEMSQVVGG) constitute a propeptide that is removed on maturation. Cysteine 24 and cysteine 29 form a disulfide bridge.

It is found in the secreted. Its function is as follows. Bacteriocin. In Enterococcus faecium (Streptococcus faecium), this protein is Enterocin-HF (entHF).